The chain runs to 151 residues: Phosphopantetheine adenylyltransferase (151 aa).

Residue Ser9 coordinates substrate. Residues 9–10 and His17 each bind ATP; that span reads SF. Lys41, Thr73, and Arg87 together coordinate substrate. ATP contacts are provided by residues 88–90, Glu98, and 122–128; these read GLR and TSFISSS.

Belongs to the bacterial CoaD family. Homohexamer. The cofactor is Mg(2+).

The protein resides in the cytoplasm. It catalyses the reaction (R)-4'-phosphopantetheine + ATP + H(+) = 3'-dephospho-CoA + diphosphate. The protein operates within cofactor biosynthesis; coenzyme A biosynthesis; CoA from (R)-pantothenate: step 4/5. In terms of biological role, reversibly transfers an adenylyl group from ATP to 4'-phosphopantetheine, yielding dephospho-CoA (dPCoA) and pyrophosphate. The sequence is that of Phosphopantetheine adenylyltransferase from Flavobacterium psychrophilum (strain ATCC 49511 / DSM 21280 / CIP 103535 / JIP02/86).